The following is a 166-amino-acid chain: MIIPRTGIGVDVHAFAAEGEARQLWVGGLLWPGERGLAGHSDGDPVAHAAADALFSAAGIGDLGTHFGTDRPEFAGASGVTLLAEAARIVRAAGFEIGNIAVQFVANRPKFGPRREESQQVLSDAAGAPVSVTATTSDGLGFTGRGEGISAVATALVYPRLSESIG.

Residues Asp-11 and His-13 each coordinate a divalent metal cation. Residues 11 to 13 and 40 to 41 each bind 4-CDP-2-C-methyl-D-erythritol 2-phosphate; these read DVH and HS. An a divalent metal cation-binding site is contributed by His-48. 4-CDP-2-C-methyl-D-erythritol 2-phosphate-binding positions include 62–64, 135–138, Phe-142, and Arg-145; these read DLG and TTSD.

The protein belongs to the IspF family. In terms of assembly, homotrimer. It depends on a divalent metal cation as a cofactor.

It catalyses the reaction 4-CDP-2-C-methyl-D-erythritol 2-phosphate = 2-C-methyl-D-erythritol 2,4-cyclic diphosphate + CMP. It participates in isoprenoid biosynthesis; isopentenyl diphosphate biosynthesis via DXP pathway; isopentenyl diphosphate from 1-deoxy-D-xylulose 5-phosphate: step 4/6. Functionally, involved in the biosynthesis of isopentenyl diphosphate (IPP) and dimethylallyl diphosphate (DMAPP), two major building blocks of isoprenoid compounds. Catalyzes the conversion of 4-diphosphocytidyl-2-C-methyl-D-erythritol 2-phosphate (CDP-ME2P) to 2-C-methyl-D-erythritol 2,4-cyclodiphosphate (ME-CPP) with a corresponding release of cytidine 5-monophosphate (CMP). The sequence is that of 2-C-methyl-D-erythritol 2,4-cyclodiphosphate synthase from Pseudarthrobacter chlorophenolicus (strain ATCC 700700 / DSM 12829 / CIP 107037 / JCM 12360 / KCTC 9906 / NCIMB 13794 / A6) (Arthrobacter chlorophenolicus).